Consider the following 227-residue polypeptide: Cytidylate kinase (227 aa).

Position 12 to 20 (12 to 20 (GPSGAGKGT)) interacts with ATP.

It belongs to the cytidylate kinase family. Type 1 subfamily.

The protein localises to the cytoplasm. The catalysed reaction is CMP + ATP = CDP + ADP. The enzyme catalyses dCMP + ATP = dCDP + ADP. This is Cytidylate kinase from Marinomonas sp. (strain MWYL1).